The sequence spans 372 residues: N-methyl-L-tryptophan oxidase (372 aa).

4–34 (DLIIIGSGSVGAAAGYYATRAGLNVLMTDAH) provides a ligand contact to FAD. Cys308 bears the S-8alpha-FAD cysteine mark.

Belongs to the MSOX/MTOX family. MTOX subfamily. Monomer. It depends on FAD as a cofactor.

It catalyses the reaction N(alpha)-methyl-L-tryptophan + O2 + H2O = L-tryptophan + formaldehyde + H2O2. Catalyzes the oxidative demethylation of N-methyl-L-tryptophan. The sequence is that of N-methyl-L-tryptophan oxidase from Escherichia coli (strain K12 / DH10B).